Reading from the N-terminus, the 669-residue chain is MGDKDDVRIGVFVCHCGVNIKASVDVEEVVEYAKKLPGVVYATDYPFFCADPGQEIIQEAIKEHDLDRVVVAACTPKIHENTFRNCVKEAGLSPYYMEMVNIREHCSFVHMQEPEKATEKAKDLIRAAVERAKRLEDVPTKEVEVENSVLIIGGGIAGIQAALDLADQGFKVYLVEKEPTIGGNMARLAKTFPTDDCAMUILAPKMVQVGNHPNIEMITYAEVKDVDGYIGNFEVTIEKKPRYVDEDACTGCGVCAEVCPIEVPNEFDLGIGTRKAIYVPFPQAMPLVYTIDMEHCIQCGLCEEACPQDPPAIDFDQEPEEIRLKVGTIIVATGYEEFDASKLEEYGYGKYDNVITTLELERMINPAGPTEGHVIRPSDGKEPHRIVFIHCVGSRCPGKEEKGEAYCSRICCMFILKNAQLIKQHEPDAEVYCCYMDVRAFGKGYEEYYERAQKQFGVRFIRGRPAEIVEDPETKNLIVRVEDTLTGEPMEIEADLVVLGCGLVAPEETYSKLADILGIDRSPDGFFKELHPKLEPVSTKVRGVQIAGVAQGPKDIPDTVAQAKGAASEASIPMSQGKVEIELITATVDEDVCGGCGACAQVCPFDAIEMVEKDGKRVAEVQDVACQGCGQCAAACPSGAMQLRYYRDEQLMPQIEALLAEALEEEEEE.

153-176 (GGGIAGIQAALDLADQGFKVYLVE) serves as a coordination point for FAD. A non-standard amino acid (selenocysteine) is located at residue Sec200. 4 consecutive 4Fe-4S ferredoxin-type domains span residues 239-270 (KKPRYVDEDACTGCGVCAEVCPIEVPNEFDLG), 287-318 (LVYTIDMEHCIQCGLCEEACPQDPPAIDFDQE), 584-613 (ITATVDEDVCGGCGACAQVCPFDAIEMVEK), and 617-646 (RVAEVQDVACQGCGQCAAACPSGAMQLRYY). The [4Fe-4S] cluster site is built by Cys249, Cys252, Cys255, Cys259, Cys296, Cys299, Cys302, Cys306, Cys593, Cys596, Cys599, Cys603, Cys626, Cys629, Cys632, and Cys636.

This sequence belongs to the HdrA family. As to quaternary structure, the ferredoxin:CoB-CoM heterodisulfide reductase is composed of three subunits; HdrA, HdrB and HdrC. Requires [4Fe-4S] cluster as cofactor. It depends on FAD as a cofactor.

The protein operates within cofactor metabolism; coenzyme M-coenzyme B heterodisulfide reduction; coenzyme B and coenzyme M from coenzyme M-coenzyme B heterodisulfide: step 1/1. Its function is as follows. Part of a complex that catalyzes the reversible reduction of CoM-S-S-CoB to the thiol-coenzymes H-S-CoM (coenzyme M) and H-S-CoB (coenzyme B). In Methanopyrus kandleri (strain AV19 / DSM 6324 / JCM 9639 / NBRC 100938), this protein is CoB--CoM heterodisulfide reductase iron-sulfur subunit A 1 (hdrA1).